Here is a 456-residue protein sequence, read N- to C-terminus: Glycine receptor subunit alpha-4 (456 aa).

The signal sequence occupies residues M1–A27. At K28–Y256 the chain is on the extracellular side. Residue N71 is glycosylated (N-linked (GlcNAc...) asparagine). 2 disulfide bridges follow: C171-C185 and C232-C243. Residue Y236 to F241 participates in strychnine binding. A helical membrane pass occupies residues Y257 to I278. The Cytoplasmic segment spans residues N279–A283. The chain crosses the membrane as a helical span at residues P284–S304. Over R305–K315 the chain is Extracellular. Residues A316–A336 traverse the membrane as a helical segment. At A337–T423 the chain is on the cytoplasmic side. The chain crosses the membrane as a helical span at residues I424–Y444. Topologically, residues K445–L456 are extracellular.

Belongs to the ligand-gated ion channel (TC 1.A.9) family. Glycine receptor (TC 1.A.9.3) subfamily. GLRA4 sub-subfamily. As to quaternary structure, homopentamer (in vitro). Heteropentamer composed of GLRA4 and GLRB. As to expression, detected in the retina inner plexiform layer, especially at the border between layer three and four (at protein level).

The protein localises to the postsynaptic cell membrane. The protein resides in the synapse. It localises to the perikaryon. Its subcellular location is the cell projection. It is found in the dendrite. The protein localises to the cell membrane. The enzyme catalyses chloride(in) = chloride(out). With respect to regulation, inhibited by strychnine. Its function is as follows. Glycine receptors are ligand-gated chloride channels. Channel opening is triggered by extracellular glycine. Channel opening is also triggered by taurine and beta-alanine. Plays a role in the down-regulation of neuronal excitability. Contributes to the generation of inhibitory postsynaptic currents. The polypeptide is Glycine receptor subunit alpha-4 (Glra4) (Mus musculus (Mouse)).